Reading from the N-terminus, the 2594-residue chain is Immunoglobulin superfamily member 10 (2594 aa).

The N-terminal stretch at 1–25 (MQKRGREVSCLLISLTAICLVVTPG) is a signal peptide. Residues 29–56 (CPRRCACYVPTEVHCTFRYLTSIPDGIP) form the LRRNT domain. 6 LRR repeats span residues 58–79 (NVER…DFSG), 82–103 (RLEL…TFSG), 106–127 (SLQV…TLYG), 130–151 (SLTR…AFYG), 154–175 (LLRL…TFVS), and 186–207 (FIKY…MVSS). Residues 219–281 (NPWTCDCHLK…VPSGSFLCTK (63 aa)) enclose the LRRCT domain. Asparagine 439 carries an N-linked (GlcNAc...) asparagine glycan. Ig-like C2-type domains follow at residues 461–567 (PKAE…YRIT) and 571–661 (PYVE…FQVS). 2 disulfide bridges follow: cysteine 497/cysteine 551 and cysteine 595/cysteine 645. N-linked (GlcNAc...) asparagine glycosylation occurs at asparagine 627. A compositionally biased stretch (basic and acidic residues) spans 670-685 (IEHDRDIDGSGLEEPK). Disordered regions lie at residues 670–725 (IEHD…RDLT) and 963–1008 (VSSN…GRER). A compositionally biased stretch (basic residues) spans 715–725 (IHKKNKHRDLT). The span at 972-984 (TTKDPGFSKRPSD) shows a compositional bias: basic and acidic residues. A compositionally biased stretch (polar residues) spans 985–1003 (SHTTAPSLFQTPRNNSTGN). The N-linked (GlcNAc...) asparagine glycan is linked to asparagine 1044. Disordered regions lie at residues 1228-1251 (TATK…PSTT), 1333-1364 (VRSK…GYST), and 1428-1457 (SQES…PSPP). Positions 1333 to 1342 (VRSKKAKDQT) are enriched in basic and acidic residues. The span at 1355–1364 (TPRQISGYST) shows a compositional bias: polar residues. 10 Ig-like C2-type domains span residues 1619-1710 (PRII…VTLS), 1715-1807 (PARI…VKIQ), 1812-1901 (PPVI…RRVV), 1912-2005 (PRIE…VRLR), 2008-2106 (PAKI…VHLT), 2112-2200 (PRIR…YKLD), 2205-2302 (PPLI…LKVL), 2308-2398 (PTFR…ILLE), 2403-2493 (PVIL…VPVT), and 2499-2592 (PRII…TYIQ). Cystine bridges form between cysteine 1641–cysteine 1694, cysteine 1738–cysteine 1791, and cysteine 1835–cysteine 1888. The LRR 11 repeat unit spans residues 1658–1681 (SGREISRGIQKTRFHVLPNGTLSI). N-linked (GlcNAc...) asparagine glycans are attached at residues asparagine 1676, asparagine 1780, asparagine 1870, and asparagine 1933. Intrachain disulfides connect cysteine 1934–cysteine 1987, cysteine 2031–cysteine 2090, cysteine 2134–cysteine 2184, cysteine 2232–cysteine 2284, cysteine 2330–cysteine 2382, cysteine 2425–cysteine 2477, and cysteine 2521–cysteine 2576. Asparagine 2072 carries N-linked (GlcNAc...) asparagine glycosylation. Asparagine 2364 carries an N-linked (GlcNAc...) asparagine glycan. Tyrosine 2574 carries the post-translational modification Phosphotyrosine.

In the embryo, expressed in the nasal mesenchyme.

Its subcellular location is the secreted. Involved in the control of early migration of neurons expressing gonadotropin-releasing hormone (GNRH neurons). May be involved in the maintenance of osteochondroprogenitor cells pool. The polypeptide is Immunoglobulin superfamily member 10 (Igsf10) (Mus musculus (Mouse)).